The primary structure comprises 443 residues: Xaa-Pro dipeptidase (443 aa).

Mn(2+) is bound by residues aspartate 246, aspartate 257, histidine 339, glutamate 384, and glutamate 423.

It belongs to the peptidase M24B family. Bacterial-type prolidase subfamily. The cofactor is Mn(2+).

The catalysed reaction is Xaa-L-Pro dipeptide + H2O = an L-alpha-amino acid + L-proline. Its function is as follows. Splits dipeptides with a prolyl residue in the C-terminal position. The sequence is that of Xaa-Pro dipeptidase from Shigella flexneri.